We begin with the raw amino-acid sequence, 971 residues long: Exportin-2 (971 aa).

N-acetylmethionine is present on Met1. In terms of domain architecture, Importin N-terminal spans 29-102; the sequence is AEKFLESVEG…KANIVHLMLS (74 aa). Ser112 carries the phosphoserine modification. N6-acetyllysine is present on residues Lys574 and Lys824. Phosphoserine is present on Ser931.

It belongs to the XPO2/CSE1 family. As to quaternary structure, found in a complex with CSE1L/XPO2, Ran and KPNA2. Binds with high affinity to importin-alpha only in the presence of RanGTP. The complex is dissociated by the combined action of RanBP1 and RanGAP1. Interacts with CFTR.

It localises to the cytoplasm. The protein localises to the nucleus. In terms of biological role, export receptor for importin-alpha. Mediates importin-alpha re-export from the nucleus to the cytoplasm after import substrates (cargos) have been released into the nucleoplasm. In the nucleus binds cooperatively to importin-alpha and to the GTPase Ran in its active GTP-bound form. Docking of this trimeric complex to the nuclear pore complex (NPC) is mediated through binding to nucleoporins. Upon transit of a nuclear export complex into the cytoplasm, disassembling of the complex and hydrolysis of Ran-GTP to Ran-GDP (induced by RANBP1 and RANGAP1, respectively) cause release of the importin-alpha from the export receptor. CSE1L/XPO2 then return to the nuclear compartment and mediate another round of transport. The directionality of nuclear export is thought to be conferred by an asymmetric distribution of the GTP- and GDP-bound forms of Ran between the cytoplasm and nucleus. This chain is Exportin-2 (CSE1L), found in Bos taurus (Bovine).